A 1240-amino-acid chain; its full sequence is Protein MMS22-like (1240 aa).

Residues 1–11 (MESEFSQSLTP) are compositionally biased toward polar residues. Residues 1 to 26 (MESEFSQSLTPPVSPSALNHYGESAP) form a disordered region.

Belongs to the MMS22 family. MMS22L subfamily. Component of the MMS22L-TONSL complex.

The protein localises to the nucleus. Its subcellular location is the chromosome. Its function is as follows. Component of the MMS22L-TONSL complex, a complex that promotes homologous recombination-mediated repair of double-strand breaks (DSBs) at stalled or collapsed replication forks. The MMS22L-TONSL complex is required to maintain genome integrity during DNA replication. It mediates the assembly of RAD51 filaments on single-stranded DNA (ssDNA): the MMS22L-TONSL complex is recruited to DSBs following histone replacement by histone chaperones and eviction of the replication protein A complex (RPA/RP-A) from DSBs. Following recruitment to DSBs, the TONSL-MMS22L complex promotes recruitment of RAD51 filaments and subsequent homologous recombination. Within the complex, MMS22L acts by binding ssDNA. The protein is Protein MMS22-like (mms22l) of Danio rerio (Zebrafish).